The following is a 1071-amino-acid chain: MGVLNISDQPPLVQAIFNRNADEVKLFLHKKDEVNALDQERRTPLHAAAWLGDVHIMDLLISAGANVNAKDHVWLTPLHRAAASRNERAVGLLLRKGADVTARDKYWQTPLHIAAANRATRCVETLLPHVSSLNMADRTGRAPLHHAAQSGYQEMVKLLLNKGANLSASDKKDRQPIHWAAYLGHLEVVKLLVSQGSDKSCKDKRGYTPLHAAAASGHVDVVKYLLRNGAEIDEPNAFGNTALHVACYTGQEAVANELVNRGANVNQPNHRGYTPLHLAAVSTNGALCLELLVNNGADVNMQSKEGKSPLHMAAIHGRFTRSQILIQNGGEIDCVDRYGNTPLHVAAKYGHELLISTLMTNGADTARQGIHGMFPLHLAVLYGSSDCCRKLLSSGQLYSIVLSMSKEHVLSAGFDINTPDNFGRTCLHAAASGGNIECLNLLLSSGADMNKKDKFGRTPLHYAAANGRYQCVVVLVGAGAEVNERDRSGCTPLHYSAASTAFCRTDRPHASTHQNQEDGEKESFLCVEHLLDNGADPCLCNTKGYSAVHYAAAHGNKQNLELLLEMCFNTLGDKESNGSISPLHLAVESGHWECVTVLIESGVCVDVCDPVGRSVLYLASQRGHSRCVELLLSQSASCLLAEHRSKWGPLHVAAANGHSECLRMLLCSEGGADLVNVTDAEGQTPLMLAVLGGHTDCVHLLLERGACPDMKDRRGRTALHRGAVMGREDCLTALLSHNVSVLSRDFQGRSALHLAASCGHADILSNLLSAADHSQPQDPLTDRHGYTPAHWAAYHGHEDCLEVLLELKPCSIQEGNPFTPLHCALINGHSGSAELLLESSVCNSLVNIRDAKGRTPLHAAAVAEDVAGLQLVLRQGADIDAVDHSGRSALMVAADYGQSGAVALLLHRAKADLSLLDVNKNTALHLACSKAHEMCAMLILKEIHNPILINATNSMLQMPLHIAARNGLATVVQALLNRGATVLAVDEEGHTPALACASNKAVADCLALILSTMKPSSSTASSSSPSSPSLNLLKHCGITAACPPLPNGGLRHGYGKDRHGATIGLDGCLTE.

28 ANK repeats span residues 7–36 (SDQP…EVNA), 40–69 (ERRT…NVNA), 73–102 (VWLT…DVTA), 106–135 (YWQT…SLNM), 139–168 (TGRA…NLSA), 172–201 (KDRQ…DKSC), 205–234 (RGYT…EIDE), 238–267 (FGNT…NVNQ), 271–301 (RGYT…DVNM), 305–334 (EGKS…EIDC), 338–367 (YGNT…DTAR), 371–400 (HGMF…LYSI), 422–451 (FGRT…DMNK), 455–484 (FGRT…EVNE), 488–539 (SGCT…DPCL), 543–573 (KGYS…TLGD), 578–607 (GSIS…CVDV), 611–640 (VGRS…SCLL), 645–674 (SKWG…GADL), 681–710 (EGQT…CPDM), 714–743 (RGRT…SVLS), 747–776 (QGRS…HSQP), 784–814 (HGYT…SIQE), 816–845 (NPFT…CNSL), 852–881 (KGRT…DIDA), 885–915 (SGRS…DLSL), 919–951 (NKNT…LINA), and 955–984 (MLQM…TVLA).

As to quaternary structure, protein phosphatase 6 (PP6) holoenzyme is proposed to be a heterotrimeric complex formed by the catalytic subunit, a SAPS domain-containing subunit (PP6R) and an ankyrin repeat-domain containing regulatory subunit (ARS).

Its function is as follows. Putative regulatory subunit of protein phosphatase 6 (PP6) that may be involved in the recognition of phosphoprotein substrates. The sequence is that of Serine/threonine-protein phosphatase 6 regulatory ankyrin repeat subunit C (ankrd52) from Danio rerio (Zebrafish).